The primary structure comprises 640 residues: Endoglucanase 2 (640 aa).

Positions 1-34 are cleaved as a signal peptide; sequence MARGGGAAGVSMAHHLGIALVVLVFAAMAQVARG. The Nucleophile role is filled by Asp93. Catalysis depends on residues His428, Asp480, and Glu489. Residues 512 to 640 constitute a propeptide, removed in mature form; that stretch reads RARGRLGQSL…DVWVTGYKLV (129 aa). Residue Asn528 is glycosylated (N-linked (GlcNAc...) asparagine).

Belongs to the glycosyl hydrolase 9 (cellulase E) family. In terms of tissue distribution, expressed in roots and flowers.

It is found in the secreted. It catalyses the reaction Endohydrolysis of (1-&gt;4)-beta-D-glucosidic linkages in cellulose, lichenin and cereal beta-D-glucans.. Its function is as follows. Hydrolyzes 1,4-beta-glycosyl linkages of 1,4-beta-glucans and 1,3-1,4-beta-glucans. Possesses broad substrate specificity for hemicelluloses of type II cell walls. Substrate preference is carboxymethyl-cellulose &gt; 1,3-1,4-beta-glucan &gt; lichenan &gt; arabinoxylan &gt; phospho-swollen cellulose &gt; xylan &gt; glucomannan. May participate in lateral root development. This is Endoglucanase 2 (GLU5) from Oryza sativa subsp. japonica (Rice).